The primary structure comprises 461 residues: Trimethylamine monooxygenase (461 aa).

FAD-binding residues include S14, E39, K40, Q41, M47, W48, and H64. NADP(+) contacts are provided by W72 and N74. The FAD site is built by N74 and A127. S206, S207, S209, R230, and T231 together coordinate NADP(+). Positions 319 and 322 each coordinate FAD. An NADP(+)-binding site is contributed by R413.

The protein belongs to the FMO family. FAD serves as cofactor.

It catalyses the reaction trimethylamine + NADPH + O2 = trimethylamine N-oxide + NADP(+) + H2O. Its function is as follows. Catalyzes the oxidation of trimethylamine (TMA) to produce trimethylamine N-oxide (TMAO). The produced TMAO is accumulated in the cell, functioning as a piezolyte, improving both growth and survival at high hydrostatic pressure (HHP). The sequence is that of Trimethylamine monooxygenase from Myroides profundi.